The following is a 279-amino-acid chain: Thymidylate synthase (279 aa).

Residue Arg37 participates in dUMP binding. Residue His67 coordinates (6R)-5,10-methylene-5,6,7,8-tetrahydrofolate. Residue 142 to 143 coordinates dUMP; that stretch reads RR. The Nucleophile role is filled by Cys162. DUMP-binding positions include 182 to 185, Asn193, and 223 to 225; these read RSAD and HLY. Position 185 (Asp185) interacts with (6R)-5,10-methylene-5,6,7,8-tetrahydrofolate. Ser278 contributes to the (6R)-5,10-methylene-5,6,7,8-tetrahydrofolate binding site.

The protein belongs to the thymidylate synthase family. Bacterial-type ThyA subfamily. Homodimer.

It localises to the cytoplasm. The enzyme catalyses dUMP + (6R)-5,10-methylene-5,6,7,8-tetrahydrofolate = 7,8-dihydrofolate + dTMP. It functions in the pathway pyrimidine metabolism; dTTP biosynthesis. In terms of biological role, catalyzes the reductive methylation of 2'-deoxyuridine-5'-monophosphate (dUMP) to 2'-deoxythymidine-5'-monophosphate (dTMP) while utilizing 5,10-methylenetetrahydrofolate (mTHF) as the methyl donor and reductant in the reaction, yielding dihydrofolate (DHF) as a by-product. This enzymatic reaction provides an intracellular de novo source of dTMP, an essential precursor for DNA biosynthesis. The protein is Thymidylate synthase of Caulobacter vibrioides (strain ATCC 19089 / CIP 103742 / CB 15) (Caulobacter crescentus).